The sequence spans 187 residues: Elongation factor P (187 aa).

The protein belongs to the elongation factor P family.

It localises to the cytoplasm. It participates in protein biosynthesis; polypeptide chain elongation. Its function is as follows. Involved in peptide bond synthesis. Stimulates efficient translation and peptide-bond synthesis on native or reconstituted 70S ribosomes in vitro. Probably functions indirectly by altering the affinity of the ribosome for aminoacyl-tRNA, thus increasing their reactivity as acceptors for peptidyl transferase. This is Elongation factor P from Helicobacter hepaticus (strain ATCC 51449 / 3B1).